The sequence spans 256 residues: Triosephosphate isomerase (256 aa).

9–11 (NWK) is a binding site for substrate. Histidine 95 (electrophile) is an active-site residue. Catalysis depends on glutamate 167, which acts as the Proton acceptor. Residues glycine 173, serine 213, and 234–235 (GG) each bind substrate.

Belongs to the triosephosphate isomerase family. In terms of assembly, homodimer.

The protein resides in the cytoplasm. It carries out the reaction D-glyceraldehyde 3-phosphate = dihydroxyacetone phosphate. Its pathway is carbohydrate biosynthesis; gluconeogenesis. The protein operates within carbohydrate degradation; glycolysis; D-glyceraldehyde 3-phosphate from glycerone phosphate: step 1/1. In terms of biological role, involved in the gluconeogenesis. Catalyzes stereospecifically the conversion of dihydroxyacetone phosphate (DHAP) to D-glyceraldehyde-3-phosphate (G3P). This is Triosephosphate isomerase from Symbiobacterium thermophilum (strain DSM 24528 / JCM 14929 / IAM 14863 / T).